The following is a 191-amino-acid chain: Peptidyl-tRNA hydrolase (191 aa).

Residue Y16 coordinates tRNA. The Proton acceptor role is filled by H21. TRNA contacts are provided by F66, N68, and N114.

This sequence belongs to the PTH family. In terms of assembly, monomer.

It is found in the cytoplasm. It carries out the reaction an N-acyl-L-alpha-aminoacyl-tRNA + H2O = an N-acyl-L-amino acid + a tRNA + H(+). Its function is as follows. Hydrolyzes ribosome-free peptidyl-tRNAs (with 1 or more amino acids incorporated), which drop off the ribosome during protein synthesis, or as a result of ribosome stalling. Catalyzes the release of premature peptidyl moieties from peptidyl-tRNA molecules trapped in stalled 50S ribosomal subunits, and thus maintains levels of free tRNAs and 50S ribosomes. This Geotalea uraniireducens (strain Rf4) (Geobacter uraniireducens) protein is Peptidyl-tRNA hydrolase.